We begin with the raw amino-acid sequence, 184 residues long: Putative tetraheme cytochrome-c type (184 aa).

The Cytoplasmic segment spans residues 1-14 (MSKHAASSAKRFSL). The chain crosses the membrane as a helical span at residues 15–35 (LALGLMFVGGIVFVWAVDFGI). Residues 36–184 (KTTNTLEFCT…HEPTEPDDAS (149 aa)) are Periplasmic-facing. Heme is bound by residues C44, C47, M50, C73, C76, and H77. 2 residues coordinate substrate: K89 and D95. The heme site is built by D95, C133, C136, H137, C165, C168, H169, and H174.

Belongs to the NapC/NirT/NrfH family. In terms of processing, binds 4 heme groups per subunit.

The protein localises to the cell inner membrane. The polypeptide is Putative tetraheme cytochrome-c type (Allochromatium vinosum (strain ATCC 17899 / DSM 180 / NBRC 103801 / NCIMB 10441 / D) (Chromatium vinosum)).